The primary structure comprises 503 residues: Maturase K (503 aa).

The protein belongs to the intron maturase 2 family. MatK subfamily.

It is found in the plastid. The protein resides in the chloroplast. Functionally, usually encoded in the trnK tRNA gene intron. Probably assists in splicing its own and other chloroplast group II introns. The sequence is that of Maturase K from Agonis flexuosa (Australian willow myrtle).